Reading from the N-terminus, the 292-residue chain is MSQNKLELIKELRQRTNSALGDVKKALEATDYNIEAAIKWLKENGIVKAAKKSGRLASEGVVSAHGTPTQSLLLEVNSETDFVAQNEKFMTLVKNVTESVFKAGASTLEEALQVKVSDSETVEQALTDATAVIGEKITLRRVLASKAKEGHVLGTYLHANNRVAAVVEVTGSNSEVAKNVAMHLAAMNPEFVLVSDIPEDRMQEIKKAFEAPKDFDKKPAQIQERILSGWLDKQLGEVVLEKQPFVMEDSLTVAKYLANANAKLVSAHRYEVGEGLEKVQSNFAEEVASMTK.

The segment at 80-83 is involved in Mg(2+) ion dislocation from EF-Tu; that stretch reads TDFV.

This sequence belongs to the EF-Ts family.

The protein localises to the cytoplasm. In terms of biological role, associates with the EF-Tu.GDP complex and induces the exchange of GDP to GTP. It remains bound to the aminoacyl-tRNA.EF-Tu.GTP complex up to the GTP hydrolysis stage on the ribosome. This chain is Elongation factor Ts, found in Mycoplasmopsis synoviae (strain 53) (Mycoplasma synoviae).